Here is a 213-residue protein sequence, read N- to C-terminus: Large ribosomal subunit protein uL3 (213 aa).

Positions Lys-130–Arg-161 are disordered.

It belongs to the universal ribosomal protein uL3 family. Part of the 50S ribosomal subunit. Forms a cluster with proteins L14 and L19.

Its function is as follows. One of the primary rRNA binding proteins, it binds directly near the 3'-end of the 23S rRNA, where it nucleates assembly of the 50S subunit. The polypeptide is Large ribosomal subunit protein uL3 (Picosynechococcus sp. (strain ATCC 27264 / PCC 7002 / PR-6) (Agmenellum quadruplicatum)).